Consider the following 189-residue polypeptide: Small ribosomal subunit protein uS5 (189 aa).

One can recognise an S5 DRBM domain in the interval 22–85 (FVDKLVAINR…EAAKRELIFV (64 aa)).

This sequence belongs to the universal ribosomal protein uS5 family. As to quaternary structure, part of the 30S ribosomal subunit. Contacts proteins S4 and S8.

Its function is as follows. With S4 and S12 plays an important role in translational accuracy. Functionally, located at the back of the 30S subunit body where it stabilizes the conformation of the head with respect to the body. The chain is Small ribosomal subunit protein uS5 from Rhizobium etli (strain CIAT 652).